Consider the following 720-residue polypeptide: IKIMVERDPIKTSFEKWANPGHFSRTLAKGDPETTTWIWNLHADAHDFDSHTEDLEEISRKIFSAHFGQLAIIFIWLSGMYFHGARFSNYEAWLADPTHIKPSAQVVWPIVGQEILNGDVGGGFRGIQITSGFFPIWRASGITSELQLYCTAIGGLIFAALMLFAGWFHYHKAAPKLSWFQVESMLNHHLAGLLGLGSLSWAGHQVHVSLPINQLLDAGVDPKEIPLPHEFILNRDLLIQLYPSFSKGLTPFFTLNWSEYSEILTFRGGLNPITGGLWLTDIVHHHLAIAVIFLIAGHMYKTNWGIGHSIQEILEAHKGPFTGEGHKGLYEILTTSWHAQLALNLAILGSLTIVVAHHMYSMPPYPYLAIDYGTQLSLFTHHMWIGGFVIIGAAAHAAIFLVRDYDSTTSYNNLFDRVLRHRDAIISHLNWTCIFLGFHSFGLYIHNDTMSALGRPQDMFSDTAIQLQPIFAQWLQNTHVTAPRFTAPAATASTSFTWGGNDLVTVGTKVALLPIPLGTADFLVHHIHAFTIHVTVLILLKGVLFARSSRLIPDKANLGFRFPCDGPGRGGTCQVSAWDHVFLGLFWMYNAISVVIFHFSWKMQSDVWGNISTQGVVTHITGGNFAQSSVTINGWLRDFLWAQASQVIQSYGSALSAYGLFFLGAHFVWAFSLMFLFSGRGYWQELIESIVWAHNKLKVAPAIQPRALSIVQGRAVGVAH.

The next 8 membrane-spanning stretches (helical) occupy residues Ile62–Ala85, Leu148–His171, Leu186–Leu210, Ile282–Tyr300, Trp337–Tyr360, Leu376–Val402, Ala424–His446, and Phe522–Leu540. Cys564 and Cys573 together coordinate [4Fe-4S] cluster. 2 helical membrane passes run His580–Trp601 and Leu655–Phe677. His666 provides a ligand contact to chlorophyll a'. Residues Met674 and Tyr682 each coordinate chlorophyll a. Trp683 serves as a coordination point for phylloquinone. A helical transmembrane segment spans residues Ala715–His720.

Belongs to the PsaA/PsaB family. The PsaA/B heterodimer binds the P700 chlorophyll special pair and subsequent electron acceptors. PSI consists of a core antenna complex that captures photons, and an electron transfer chain that converts photonic excitation into a charge separation. The eukaryotic PSI reaction center is composed of at least 11 subunits. P700 is a chlorophyll a/chlorophyll a' dimer, A0 is one or more chlorophyll a, A1 is one or both phylloquinones and FX is a shared 4Fe-4S iron-sulfur center. serves as cofactor.

It is found in the plastid. The protein localises to the chloroplast thylakoid membrane. The enzyme catalyses reduced [plastocyanin] + hnu + oxidized [2Fe-2S]-[ferredoxin] = oxidized [plastocyanin] + reduced [2Fe-2S]-[ferredoxin]. PsaA and PsaB bind P700, the primary electron donor of photosystem I (PSI), as well as the electron acceptors A0, A1 and FX. PSI is a plastocyanin-ferredoxin oxidoreductase, converting photonic excitation into a charge separation, which transfers an electron from the donor P700 chlorophyll pair to the spectroscopically characterized acceptors A0, A1, FX, FA and FB in turn. Oxidized P700 is reduced on the lumenal side of the thylakoid membrane by plastocyanin. This chain is Photosystem I P700 chlorophyll a apoprotein A1, found in Ephedra tweediana (Vining horsetail).